Consider the following 129-residue polypeptide: Large ribosomal subunit protein uL22 (129 aa).

It belongs to the universal ribosomal protein uL22 family. In terms of assembly, part of the 50S ribosomal subunit.

In terms of biological role, this protein binds specifically to 23S rRNA; its binding is stimulated by other ribosomal proteins, e.g. L4, L17, and L20. It is important during the early stages of 50S assembly. It makes multiple contacts with different domains of the 23S rRNA in the assembled 50S subunit and ribosome. Its function is as follows. The globular domain of the protein is located near the polypeptide exit tunnel on the outside of the subunit, while an extended beta-hairpin is found that lines the wall of the exit tunnel in the center of the 70S ribosome. This is Large ribosomal subunit protein uL22 from Mesorhizobium japonicum (strain LMG 29417 / CECT 9101 / MAFF 303099) (Mesorhizobium loti (strain MAFF 303099)).